The chain runs to 229 residues: Large ribosomal subunit protein uL1 (229 aa).

This sequence belongs to the universal ribosomal protein uL1 family. In terms of assembly, part of the 50S ribosomal subunit.

Functionally, binds directly to 23S rRNA. The L1 stalk is quite mobile in the ribosome, and is involved in E site tRNA release. In terms of biological role, protein L1 is also a translational repressor protein, it controls the translation of the L11 operon by binding to its mRNA. The polypeptide is Large ribosomal subunit protein uL1 (Latilactobacillus sakei subsp. sakei (strain 23K) (Lactobacillus sakei subsp. sakei)).